The chain runs to 189 residues: MPRDDPITEEERRANSATDLIRMRLARLQQNIDKPAPIPIKKETLRAPKEPLEFVRNVVGSSAAAGSAEFHIYRNNRRKEQNRLDYIDAVAKKEELDDAYRHKVEKLEKEEESKTAKKRAKRLRQKAAAKKRKLTKKNNESDESSSDDSDSDSGSGSDNESEGKQNTEVEDKDKVEKEETDDEKTEVST.

Residues 105-115 (EKLEKEEESKT) show a composition bias toward basic and acidic residues. The disordered stretch occupies residues 105 to 189 (EKLEKEEESK…TDDEKTEVST (85 aa)). Residues 116-136 (AKKRAKRLRQKAAAKKRKLTK) are compositionally biased toward basic residues. Positions 141–151 (SDESSSDDSDS) are enriched in acidic residues. Over residues 161–177 (SEGKQNTEVEDKDKVEK) the composition is skewed to basic and acidic residues. Residues 178 to 189 (EETDDEKTEVST) show a composition bias toward acidic residues.

This is an uncharacterized protein from Caenorhabditis elegans.